A 398-amino-acid chain; its full sequence is MKQLTILGSTGSIGNSTLSVVRANPELFKVTALVAGRNVREMAQQCLEFSPRYAAMSDEHSAKSLRLLLAEQGSDTEVYSGETAACELAALDDVDQVMAAIVGIAGLPSTLAAIRAGKQVLLANKESLITCGKLFMDEVKRSRAQLLPIDSEHNAIFQSLPERIQRQLGYSSLNENGVSRIILTGSGGPFRETPLSQFSDVTPDQACAHPNWSMGRKISVDSATMMNKGLEYIEARWLFNASAEQIEVVLHPQSVIHSMVRYHDGSILAQMGTPDMRTPIAHAMAYPMRVSSGVAPLDFCKVGALTFTTPDYQRYPCLKLAIDACNAGQAATTALNAANEISVMAFLDSKIRFTDIEVINRTVVEGLLLSEPTSVEEVLVIDRKARDVAAQVIAKLNN.

NADPH is bound by residues Thr-10, Gly-11, Ser-12, Ile-13, Gly-36, Arg-37, Asn-38, and Asn-124. Position 125 (Lys-125) interacts with 1-deoxy-D-xylulose 5-phosphate. Glu-126 serves as a coordination point for NADPH. Asp-150 contacts Mn(2+). The 1-deoxy-D-xylulose 5-phosphate site is built by Ser-151, Glu-152, Ser-186, and His-209. Glu-152 serves as a coordination point for Mn(2+). Gly-215 contacts NADPH. 1-deoxy-D-xylulose 5-phosphate is bound by residues Ser-222, Asn-227, Lys-228, and Glu-231. Glu-231 lines the Mn(2+) pocket.

This sequence belongs to the DXR family. In terms of assembly, homodimer. It depends on Mg(2+) as a cofactor. Mn(2+) serves as cofactor.

The catalysed reaction is 2-C-methyl-D-erythritol 4-phosphate + NADP(+) = 1-deoxy-D-xylulose 5-phosphate + NADPH + H(+). It functions in the pathway isoprenoid biosynthesis; isopentenyl diphosphate biosynthesis via DXP pathway; isopentenyl diphosphate from 1-deoxy-D-xylulose 5-phosphate: step 1/6. Functionally, catalyzes the NADPH-dependent rearrangement and reduction of 1-deoxy-D-xylulose-5-phosphate (DXP) to 2-C-methyl-D-erythritol 4-phosphate (MEP). The polypeptide is 1-deoxy-D-xylulose 5-phosphate reductoisomerase (Yersinia pseudotuberculosis serotype O:1b (strain IP 31758)).